The primary structure comprises 142 residues: Ribosome maturation factor RimP (142 aa).

It belongs to the RimP family.

It is found in the cytoplasm. Required for maturation of 30S ribosomal subunits. The chain is Ribosome maturation factor RimP from Sulfurovum sp. (strain NBC37-1).